Reading from the N-terminus, the 316-residue chain is Acetyl-coenzyme A carboxylase carboxyl transferase subunit alpha (316 aa).

The region spanning 39 to 293 is the CoA carboxyltransferase C-terminal domain; the sequence is KLEEKNAQLT…KKHLQANLTN (255 aa).

This sequence belongs to the AccA family. Acetyl-CoA carboxylase is a heterohexamer composed of biotin carboxyl carrier protein (AccB), biotin carboxylase (AccC) and two subunits each of ACCase subunit alpha (AccA) and ACCase subunit beta (AccD).

The protein localises to the cytoplasm. The catalysed reaction is N(6)-carboxybiotinyl-L-lysyl-[protein] + acetyl-CoA = N(6)-biotinyl-L-lysyl-[protein] + malonyl-CoA. It participates in lipid metabolism; malonyl-CoA biosynthesis; malonyl-CoA from acetyl-CoA: step 1/1. Component of the acetyl coenzyme A carboxylase (ACC) complex. First, biotin carboxylase catalyzes the carboxylation of biotin on its carrier protein (BCCP) and then the CO(2) group is transferred by the carboxyltransferase to acetyl-CoA to form malonyl-CoA. This Coxiella burnetii (strain CbuK_Q154) (Coxiella burnetii (strain Q154)) protein is Acetyl-coenzyme A carboxylase carboxyl transferase subunit alpha.